Consider the following 118-residue polypeptide: Na(+)/H(+) antiporter subunit G1 (118 aa).

3 helical membrane-spanning segments follow: residues 4–24 (IILI…SALA), 38–58 (AHAA…GTFL), and 60–80 (FIAT…FVLI).

Belongs to the CPA3 antiporters (TC 2.A.63) subunit G family. May form a heterooligomeric complex that consists of seven subunits: mnhA1, mnhB1, mnhC1, mnhD1, mnhE1, mnhF1 and mnhG1.

The protein resides in the cell membrane. In terms of biological role, mnh complex is a Na(+)/H(+) antiporter involved in Na(+) excretion. This chain is Na(+)/H(+) antiporter subunit G1 (mnhG1), found in Staphylococcus aureus (strain Mu3 / ATCC 700698).